A 73-amino-acid chain; its full sequence is UPF0235 protein PERMA_1406 (73 aa).

This sequence belongs to the UPF0235 family.

The chain is UPF0235 protein PERMA_1406 from Persephonella marina (strain DSM 14350 / EX-H1).